Consider the following 132-residue polypeptide: Small ribosomal subunit protein uS8 (132 aa).

This sequence belongs to the universal ribosomal protein uS8 family. As to quaternary structure, part of the 30S ribosomal subunit. Contacts proteins S5 and S12.

One of the primary rRNA binding proteins, it binds directly to 16S rRNA central domain where it helps coordinate assembly of the platform of the 30S subunit. The chain is Small ribosomal subunit protein uS8 from Streptococcus agalactiae serotype Ia (strain ATCC 27591 / A909 / CDC SS700).